Here is a 118-residue protein sequence, read N- to C-terminus: Putative pterin-4-alpha-carbinolamine dehydratase (118 aa).

It belongs to the pterin-4-alpha-carbinolamine dehydratase family.

The enzyme catalyses (4aS,6R)-4a-hydroxy-L-erythro-5,6,7,8-tetrahydrobiopterin = (6R)-L-erythro-6,7-dihydrobiopterin + H2O. In Xanthomonas oryzae pv. oryzae (strain PXO99A), this protein is Putative pterin-4-alpha-carbinolamine dehydratase.